The primary structure comprises 210 residues: Ribosomal RNA small subunit methyltransferase G (210 aa).

Residues Gly76, Met81, 127–128 (VE), and Arg145 contribute to the S-adenosyl-L-methionine site.

It belongs to the methyltransferase superfamily. RNA methyltransferase RsmG family.

It is found in the cytoplasm. The enzyme catalyses guanosine(527) in 16S rRNA + S-adenosyl-L-methionine = N(7)-methylguanosine(527) in 16S rRNA + S-adenosyl-L-homocysteine. In terms of biological role, specifically methylates the N7 position of guanine in position 527 of 16S rRNA. In Acinetobacter baumannii (strain AB307-0294), this protein is Ribosomal RNA small subunit methyltransferase G.